Reading from the N-terminus, the 205-residue chain is Ribosome maturation factor RimP (205 aa).

It belongs to the RimP family.

It localises to the cytoplasm. In terms of biological role, required for maturation of 30S ribosomal subunits. The polypeptide is Ribosome maturation factor RimP (Sinorhizobium fredii (strain NBRC 101917 / NGR234)).